The primary structure comprises 1129 residues: Protein TPR1 (1129 aa).

A LisH domain is found at leucine 4–phenylalanine 36. The region spanning phenylalanine 34–lysine 92 is the CTLH domain. 11 WD repeats span residues serine 337–serine 377, glutamate 398–glutamine 437, alanine 443–glutamate 485, histidine 487–aspartate 527, lysine 579–serine 618, glycine 623–arginine 662, aspartate 762–serine 801, asparagine 829–threonine 867, proline 870–arginine 910, glycine 913–serine 952, and alanine 1005–arginine 1044. A disordered region spans residues leucine 1092–arginine 1129. Over residues threonine 1113–arginine 1129 the composition is skewed to low complexity.

In terms of assembly, tetramer. Interacts with D53. Interacts with WOX1. Interacts with MOF1. Expressed in panicles, stems, leaves, spikelets and seed endosperm.

Probable downstream regulator of strigolactones signaling. This Oryza sativa subsp. japonica (Rice) protein is Protein TPR1.